We begin with the raw amino-acid sequence, 448 residues long: MCDSKDNSGVSEKCGKKFTNYPLNTTPTSLNYNLPEISKKFYNLKNKYSRNGYGLSKTEFPSSIENCPSNEYSIMYDNKDPRFLIRFLLDDGRYIIADRDDGEVFDEAPTYLDNNNHPIISRHYTGEERQKFEQVGSGDYITGEQFFQFYTQNKTRVLSNCRALDSRTILLSTAKIFPIYPPASETQLTAFVNSSFYAAAIPQLPQTSLLENIPEPTSLDDSGVLPKDAVRAVKGSALLPCIIVHDPNLNNSDKMKFNTYYLLEYKEYWHQLWSQIIPAHQTVKIQERTGISEVVQNSMIEDLNMYIGADFGMYFYLRSSGFKEQITRGLNRPLSQTPTQLGERVEEMEYYNSNDLDVRYVKHALAREFTLKRVNGEIVKNWVAVDYRMAGIQSYPNAPITNPLTLTKHTIIRCENSYDGHIFKTPLIFKNGEVIVKTNEELIPKINQ.

Positions 19 to 200 (TNYPLNTTPT…FVNSSFYAAA (182 aa)) are beta-trefoil domain. A disulfide bond links C67 and C161. The segment at 226–407 (PKDAVRAVKG…APITNPLTLT (182 aa)) is probable pore-forming domain.

This sequence belongs to the toxin_10 family. As to quaternary structure, forms a heterodimer with BinA. In terms of processing, processed by proteases extracted from mosquito larval gut.

It localises to the spore. The protein resides in the perispore. Its function is as follows. Component of a binary toxin active against Culex and some Aedes mosquito larvae. This subunit is responsible for localized binding to specific regions of the host larval gut. The individual subunits are not toxic. BinAB and this subunit alone bind to the gastric caecum and posterior midgut of C.quinquefasciatus larvae. Binary toxin internalization into host gut cells requires both proteins. Does not bind to the midgut of Aedes aegypti. Toxic to Aedes atropalpus mosquito larvae; mortality towards both C.quinquefasciatus and A.atropalpus is maximal by 48 hours. A.aegypti is not very susceptible to this toxin. Binding component of binary toxin. The 51 kDa polypeptide acts synergetically with the 42 kDa polypeptide for expression of a larvicidal toxin. The sequence is that of Binary larvicide subunit BinB from Lysinibacillus sphaericus (Bacillus sphaericus).